The following is a 276-amino-acid chain: tRNA dimethylallyltransferase (276 aa).

Residues 9-12 form an interaction with substrate tRNA region; it reads DSLS.

Belongs to the IPP transferase family. Monomer. Mg(2+) serves as cofactor.

It catalyses the reaction adenosine(37) in tRNA + dimethylallyl diphosphate = N(6)-dimethylallyladenosine(37) in tRNA + diphosphate. Functionally, catalyzes the transfer of a dimethylallyl group onto the adenine at position 37 in tRNAs that read codons beginning with uridine, leading to the formation of N6-(dimethylallyl)adenosine (i(6)A). This chain is tRNA dimethylallyltransferase (miaA), found in Helicobacter pylori (strain G27).